A 295-amino-acid polypeptide reads, in one-letter code: 4-hydroxy-tetrahydrodipicolinate synthase (295 aa).

Residue Thr46 participates in pyruvate binding. The active-site Proton donor/acceptor is Tyr134. Lys162 acts as the Schiff-base intermediate with substrate in catalysis. Ile205 is a pyruvate binding site.

The protein belongs to the DapA family. In terms of assembly, homotetramer; dimer of dimers.

The protein localises to the cytoplasm. It catalyses the reaction L-aspartate 4-semialdehyde + pyruvate = (2S,4S)-4-hydroxy-2,3,4,5-tetrahydrodipicolinate + H2O + H(+). The protein operates within amino-acid biosynthesis; L-lysine biosynthesis via DAP pathway; (S)-tetrahydrodipicolinate from L-aspartate: step 3/4. Its function is as follows. Catalyzes the condensation of (S)-aspartate-beta-semialdehyde [(S)-ASA] and pyruvate to 4-hydroxy-tetrahydrodipicolinate (HTPA). This is 4-hydroxy-tetrahydrodipicolinate synthase from Anaeromyxobacter dehalogenans (strain 2CP-1 / ATCC BAA-258).